The chain runs to 591 residues: MRSHYCGNLNKSLAGQTVELCGWVNRRRDLGGLIFIDMRDREGVVQVVVDPDMKDIFSTANQLRNEFCIKFTGEVRVRPDSQVNKDMSTGEVELYATGLEIINRSEALPLDFNQTNSEEQRLKYRYIDLRRPEMSDRIKLRARASSFVRRFLDENLFLDIETPVLTKATPEGARDYLVPSRVHKGSFYALPQSPQLFKQLLMMSGFDRYYQIVKCFRDEDLRADRQPEFTQIDIETSFLSSNQVRDITERLVHDMWKELLDVELGQFPIMKFSEAIRRFGSDKPDLRNPLELVDIADLLKDVEFQVFAGPANDEKGRVAVIRVPGGASLSRKQIDEYGKFVGIYGAKGLAWMKVNDRAAGLEGVQSPVAKFLNADVVNGILERTEAESGDIILFGADKANIVSEAMGALRIKLGDDLELTDKKAWAPLWVIDFPMFEEDGEGNLHAMHHPFTSPLGMTAEELKVNPAAANSDAYDMVINGYEVGGGSVRIHNAEMQTAVFGILGIEAKEQQEKFGFLLEALKYGTPPHAGLAFGLDRLAMLLCGTENIRDVIAFPKTTAAACLLTNAPSPANPDSLAELAIAVKFAEKKDA.

An L-aspartate-binding site is contributed by E171. The segment at 195 to 198 (QLFK) is aspartate. Residue R217 participates in L-aspartate binding. ATP contacts are provided by residues 217 to 219 (RDE) and Q226. H448 contributes to the L-aspartate binding site. Residue E482 coordinates ATP. L-aspartate is bound at residue R489. Residue 534 to 537 (GLDR) coordinates ATP.

Belongs to the class-II aminoacyl-tRNA synthetase family. Type 1 subfamily. As to quaternary structure, homodimer.

The protein localises to the cytoplasm. It carries out the reaction tRNA(Asp) + L-aspartate + ATP = L-aspartyl-tRNA(Asp) + AMP + diphosphate. Catalyzes the attachment of L-aspartate to tRNA(Asp) in a two-step reaction: L-aspartate is first activated by ATP to form Asp-AMP and then transferred to the acceptor end of tRNA(Asp). The protein is Aspartate--tRNA ligase of Aliivibrio salmonicida (strain LFI1238) (Vibrio salmonicida (strain LFI1238)).